The sequence spans 128 residues: Tachykinin-4 (128 aa).

The N-terminal stretch at 1–16 is a signal peptide; that stretch reads MLPLLALLLLIGPSVC. The propeptide occupies 17–54; it reads TTAGDREELAFGAEAESWVTVNLKGIPVPSIELKLQEL. A Methionine amide modification is found at M66. Residues 69–128 constitute a propeptide that is removed on maturation; sequence RVGGYQLGRIVQDLLGTRGLSIEGTCRQAASQQRARPGAVTRESLQSREEDEAPLTTSNV. Residues 96–128 are disordered; the sequence is QAASQQRARPGAVTRESLQSREEDEAPLTTSNV.

The protein belongs to the tachykinin family. Expressed in hematopoietic cells with highest levels in pre- and pro-B cells but not in later developmental stages. Also detected in uterus, skeletal muscle, brain, spleen, stomach, skin and lactating mammary gland and in cells of myeloid lineage including dendritic and microglial cells and macrophages. In uterus, highest expression is observed in non-pregnant diestrus mice and in day 5 pregnant mice. Compared with mice in diestrus, decreases 2.6-fold in uteri from non-pregnant mice in estrus and 10.2-fold in day 17 pregnant mice. Detected at sites of chronic inflammation such as granulomas.

It localises to the secreted. Functionally, tachykinins are active peptides which excite neurons, evoke behavioral responses, are potent vasodilators and secretagogues, and contract (directly or indirectly) many smooth muscles. Hemokinin induces plasma extravasation, mast cell degranulation, muscle contraction, salivary secretion and scratching behavior. Increases sperm motility. Induces potent analgesic effects and may play a role in pain modulation. Promotes survival of bone marrow B lineage cells and of cultured LPS-stimulated pre-B cells and may act as an autocrine factor required for B-cell survival and proliferation. Lowers systemic arterial pressure following intravenous injection. Induces interferon-gamma production and may play a role in the inflammatory response. Shows potent affinity and specificity for the NK-1 receptor. This is Tachykinin-4 from Mus musculus (Mouse).